A 196-amino-acid chain; its full sequence is DnaA initiator-associating protein DiaA (196 aa).

An SIS domain is found at 34 to 196 (LVQSLLNGNK…DNTLFPHQDD (163 aa)).

This sequence belongs to the SIS family. DiaA subfamily. Homotetramer; dimer of dimers.

Functionally, required for the timely initiation of chromosomal replication via direct interactions with the DnaA initiator protein. The polypeptide is DnaA initiator-associating protein DiaA (Yersinia enterocolitica serotype O:8 / biotype 1B (strain NCTC 13174 / 8081)).